Here is a 512-residue protein sequence, read N- to C-terminus: ATP synthase subunit alpha (512 aa).

Position 169–176 (169–176) interacts with ATP; sequence GDRQTGKT.

It belongs to the ATPase alpha/beta chains family. In terms of assembly, F-type ATPases have 2 components, CF(1) - the catalytic core - and CF(0) - the membrane proton channel. CF(1) has five subunits: alpha(3), beta(3), gamma(1), delta(1), epsilon(1). CF(0) has three main subunits: a(1), b(2) and c(9-12). The alpha and beta chains form an alternating ring which encloses part of the gamma chain. CF(1) is attached to CF(0) by a central stalk formed by the gamma and epsilon chains, while a peripheral stalk is formed by the delta and b chains.

The protein resides in the cell inner membrane. The enzyme catalyses ATP + H2O + 4 H(+)(in) = ADP + phosphate + 5 H(+)(out). Produces ATP from ADP in the presence of a proton gradient across the membrane. The alpha chain is a regulatory subunit. The protein is ATP synthase subunit alpha of Orientia tsutsugamushi (strain Ikeda) (Rickettsia tsutsugamushi).